The chain runs to 95 residues: Large ribosomal subunit protein bL25 (95 aa).

Belongs to the bacterial ribosomal protein bL25 family. As to quaternary structure, part of the 50S ribosomal subunit; part of the 5S rRNA/L5/L18/L25 subcomplex. Contacts the 5S rRNA. Binds to the 5S rRNA independently of L5 and L18.

This is one of the proteins that binds to the 5S RNA in the ribosome where it forms part of the central protuberance. This is Large ribosomal subunit protein bL25 from Shewanella piezotolerans (strain WP3 / JCM 13877).